Reading from the N-terminus, the 105-residue chain is Large ribosomal subunit protein uL24 (105 aa).

It belongs to the universal ribosomal protein uL24 family. Part of the 50S ribosomal subunit.

Functionally, one of two assembly initiator proteins, it binds directly to the 5'-end of the 23S rRNA, where it nucleates assembly of the 50S subunit. In terms of biological role, one of the proteins that surrounds the polypeptide exit tunnel on the outside of the subunit. This Xanthobacter autotrophicus (strain ATCC BAA-1158 / Py2) protein is Large ribosomal subunit protein uL24.